A 445-amino-acid polypeptide reads, in one-letter code: D-serine transporter DsdX (445 aa).

At 1–4 the chain is on the cytoplasmic side; it reads MHSQ. The chain crosses the membrane as a helical span at residues 5 to 25; that stretch reads IWVVSTLLISIVLIVLTIVKF. Residues 26 to 28 are Periplasmic-facing; it reads KFH. A helical membrane pass occupies residues 29–49; that stretch reads PFLALLLASFFVGTMMGMGPL. Residues 50–56 are Cytoplasmic-facing; the sequence is DMVNAIE. A helical transmembrane segment spans residues 57-77; the sequence is SGIGGTLGFLAAVIGLGTILG. At 78 to 105 the chain is on the periplasmic side; sequence KMMEVSGAAERIGLTLQRCRWLSVDVIM. A helical transmembrane segment spans residues 106 to 126; sequence VLVGLICGITLFVEVGVVLLI. The Cytoplasmic portion of the chain corresponds to 127–139; that stretch reads PLAFSIAKKTNTS. Residues 140–160 traverse the membrane as a helical segment; sequence LLKLAIPLCTALMAVHCVVPP. Residues 161 to 177 lie on the Periplasmic side of the membrane; the sequence is HPAALYVANKLGADIGS. Residues 178-198 traverse the membrane as a helical segment; that stretch reads VIVYGLLVGLMASLIGGPLFL. Topologically, residues 199–223 are cytoplasmic; sequence KFLGQRLPFKPVPTEFADLKVRDEK. The chain crosses the membrane as a helical span at residues 224 to 244; sequence TLPSLGATLFTILLPIALMLV. Residues 245–257 lie on the Periplasmic side of the membrane; it reads KTIAELNMARESG. Residues 258–278 form a helical membrane-spanning segment; that stretch reads LYILVEFIGNPITAMFIAVFV. The Cytoplasmic portion of the chain corresponds to 279–301; it reads AYYVLGIRQHMSMGTMLTHTENG. The chain crosses the membrane as a helical span at residues 302–322; sequence FGSIANILLIIGAGGAFNAIL. The Periplasmic portion of the chain corresponds to 323–342; that stretch reads KSSSLADTLAVILSNMHMHP. The next 3 membrane-spanning stretches (helical) occupy residues 343–363, 364–384, and 385–405; these read ILLAWLVALILHAAVGSATVA, MMGATAIVAPMLPLYPDISPE, and IIAIAIGSGAIGCTIVTDSLF. Residues 406-424 are Cytoplasmic-facing; that stretch reads WLVKQYCGATLNETFKYYT. A helical membrane pass occupies residues 425–445; sequence TATFIASVVALAGTFLLSFII.

The protein belongs to the GntP permease family.

It localises to the cell inner membrane. Functionally, a D-serine-specific transporter, may function as a H(+) symporter. This Escherichia coli (strain K12) protein is D-serine transporter DsdX.